We begin with the raw amino-acid sequence, 409 residues long: tRNA(Met) cytidine acetate ligase (409 aa).

ATP contacts are provided by residues 7–20, glycine 102, asparagine 169, and arginine 194; that span reads VVEYNPMHNGHLYH.

This sequence belongs to the TmcAL family.

The protein localises to the cytoplasm. The catalysed reaction is cytidine(34) in elongator tRNA(Met) + acetate + ATP = N(4)-acetylcytidine(34) in elongator tRNA(Met) + AMP + diphosphate. Functionally, catalyzes the formation of N(4)-acetylcytidine (ac(4)C) at the wobble position of elongator tRNA(Met), using acetate and ATP as substrates. First activates an acetate ion to form acetyladenylate (Ac-AMP) and then transfers the acetyl group to tRNA to form ac(4)C34. The polypeptide is tRNA(Met) cytidine acetate ligase (Clostridium botulinum (strain Langeland / NCTC 10281 / Type F)).